The sequence spans 694 residues: DNA-directed RNA polymerase subunit beta' (694 aa).

Cys69, Cys71, Cys87, and Cys90 together coordinate Zn(2+). 3 residues coordinate Mg(2+): Asp489, Asp491, and Asp493.

Belongs to the RNA polymerase beta' chain family. RpoC1 subfamily. In plastids the minimal PEP RNA polymerase catalytic core is composed of four subunits: alpha, beta, beta', and beta''. When a (nuclear-encoded) sigma factor is associated with the core the holoenzyme is formed, which can initiate transcription. Requires Mg(2+) as cofactor. Zn(2+) serves as cofactor.

Its subcellular location is the plastid. It localises to the chloroplast. The enzyme catalyses RNA(n) + a ribonucleoside 5'-triphosphate = RNA(n+1) + diphosphate. Its function is as follows. DNA-dependent RNA polymerase catalyzes the transcription of DNA into RNA using the four ribonucleoside triphosphates as substrates. This chain is DNA-directed RNA polymerase subunit beta', found in Gossypium barbadense (Sea Island cotton).